A 484-amino-acid chain; its full sequence is Cobyric acid synthase (484 aa).

A GATase cobBQ-type domain is found at 251 to 438 (ALKVAVPVLS…LHGLFGSDAY (188 aa)). The active-site Nucleophile is the C333. Residue H430 is part of the active site.

This sequence belongs to the CobB/CobQ family. CobQ subfamily.

It functions in the pathway cofactor biosynthesis; adenosylcobalamin biosynthesis. Its function is as follows. Catalyzes amidations at positions B, D, E, and G on adenosylcobyrinic A,C-diamide. NH(2) groups are provided by glutamine, and one molecule of ATP is hydrogenolyzed for each amidation. The chain is Cobyric acid synthase from Sinorhizobium fredii (strain NBRC 101917 / NGR234).